The primary structure comprises 483 residues: Glycogen synthase (483 aa).

Lysine 18 contributes to the ADP-alpha-D-glucose binding site.

It belongs to the glycosyltransferase 1 family. Bacterial/plant glycogen synthase subfamily.

It catalyses the reaction [(1-&gt;4)-alpha-D-glucosyl](n) + ADP-alpha-D-glucose = [(1-&gt;4)-alpha-D-glucosyl](n+1) + ADP + H(+). It functions in the pathway glycan biosynthesis; glycogen biosynthesis. In terms of biological role, synthesizes alpha-1,4-glucan chains using ADP-glucose. This Rhodopseudomonas palustris (strain ATCC BAA-98 / CGA009) protein is Glycogen synthase.